Consider the following 814-residue polypeptide: Valine--tRNA ligase (814 aa).

Residues 46-56 (PTVSGQLHIGH) carry the 'HIGH' region motif. Residues 536–540 (KMSKS) carry the 'KMSKS' region motif. Lysine 539 serves as a coordination point for ATP.

Belongs to the class-I aminoacyl-tRNA synthetase family. ValS type 2 subfamily. As to quaternary structure, monomer.

Its subcellular location is the cytoplasm. The catalysed reaction is tRNA(Val) + L-valine + ATP = L-valyl-tRNA(Val) + AMP + diphosphate. Its function is as follows. Catalyzes the attachment of valine to tRNA(Val). As ValRS can inadvertently accommodate and process structurally similar amino acids such as threonine, to avoid such errors, it has a 'posttransfer' editing activity that hydrolyzes mischarged Thr-tRNA(Val) in a tRNA-dependent manner. The polypeptide is Valine--tRNA ligase (Rickettsia typhi (strain ATCC VR-144 / Wilmington)).